Reading from the N-terminus, the 201-residue chain is Small ribosomal subunit protein uS4 (201 aa).

Positions serine 91–glutamate 151 constitute an S4 RNA-binding domain.

It belongs to the universal ribosomal protein uS4 family. As to quaternary structure, part of the 30S ribosomal subunit. Contacts protein S5. The interaction surface between S4 and S5 is involved in control of translational fidelity.

Its function is as follows. One of the primary rRNA binding proteins, it binds directly to 16S rRNA where it nucleates assembly of the body of the 30S subunit. Functionally, with S5 and S12 plays an important role in translational accuracy. The chain is Small ribosomal subunit protein uS4 from Corynebacterium glutamicum (strain ATCC 13032 / DSM 20300 / JCM 1318 / BCRC 11384 / CCUG 27702 / LMG 3730 / NBRC 12168 / NCIMB 10025 / NRRL B-2784 / 534).